Consider the following 805-residue polypeptide: Cell division cycle 5-related protein (805 aa).

HTH myb-type domains lie at 1–58 and 59–108; these read MPRI…DPSI and KKTE…DQAQ. 2 DNA-binding regions (H-T-H motif) span residues 31-54 and 82-104; these read WSRIASLLHRKSAKQCKARWYEWL and WRTIAPLIGRTAAQCLERYEYLL. A compositionally biased stretch (basic and acidic residues) spans 108-127; it reads QAKEGDKDEGDDPRKLRPGE. Disordered stretches follow at residues 108–143, 246–293, 409–442, and 530–556; these read QAKEGDKDEGDDPRKLRPGEIDPNPETKPARPDPID, HLEG…HVKK, LSTPYRTPGEGSGSTPRQGMTPRGAIGTPSQRSV, and LERRRRSQAVQRELPRPSNVNTSVLRP. Positions 142 to 193 form a coiled coil; sequence IDMDEDELEMLSEARARLANTQGKKAKRKAREKQLEEARRLAALQKRRELRA. Residues 246 to 274 are compositionally biased toward basic and acidic residues; that stretch reads HLEGKMRDEIEQQERKKDKERMKKKKESD. Coiled-coil stretches lie at residues 511–542 and 678–804; these read EDAADIDERALALRAKQEELERRRRSQAVQRE and YTRA…SKLQ.

The protein belongs to the CEF1 family. As to quaternary structure, component of the precatalytic, catalytic and postcatalytic spliceosome complexes.

The protein resides in the nucleus. Its subcellular location is the cytoplasm. DNA-binding protein involved in cell cycle control. May act as a transcription activator. Plays a role in pre-mRNA splicing as core component of precatalytic, catalytic and postcatalytic spliceosomal complexes. May also play a role in the response to DNA damage (DDR). This chain is Cell division cycle 5-related protein (cdc5l), found in Nematostella vectensis (Starlet sea anemone).